Consider the following 208-residue polypeptide: Thioesterase 1/protease 1/lysophospholipase L1 (208 aa).

The first 26 residues, 1-26, serve as a signal peptide directing secretion; sequence MMNFNNVFRWHLPFLFLVLLTFRAAA. Serine 36 functions as the Nucleophile in the catalytic mechanism. Residues glycine 70 and asparagine 99 each coordinate substrate. Active-site residues include aspartate 180 and histidine 183.

It belongs to the 'GDSL' lipolytic enzyme family. Monomer or homotetramer.

Its subcellular location is the periplasm. The enzyme catalyses a fatty acyl-CoA + H2O = a fatty acid + CoA + H(+). It carries out the reaction hexadecanoyl-CoA + H2O = hexadecanoate + CoA + H(+). The catalysed reaction is (9Z)-hexadecenoyl-CoA + H2O = (9Z)-hexadecenoate + CoA + H(+). It catalyses the reaction octadecanoyl-CoA + H2O = octadecanoate + CoA + H(+). The enzyme catalyses (9Z)-octadecenoyl-CoA + H2O = (9Z)-octadecenoate + CoA + H(+). It carries out the reaction (9Z)-octadecenoyl-[ACP] + H2O = (9Z)-octadecenoate + holo-[ACP] + H(+). The catalysed reaction is (11Z)-octadecenoyl-CoA + H2O = (11Z)-octadecenoate + CoA + H(+). It catalyses the reaction tetradecanoyl-CoA + H2O = tetradecanoate + CoA + H(+). The enzyme catalyses (5Z,8Z,11Z,14Z)-eicosatetraenoyl-CoA + H2O = (5Z,8Z,11Z,14Z)-eicosatetraenoate + CoA + H(+). It carries out the reaction dodecanoyl-CoA + H2O = dodecanoate + CoA + H(+). The catalysed reaction is decanoyl-CoA + H2O = decanoate + CoA + H(+). It catalyses the reaction hexanoyl-CoA + H2O = hexanoate + CoA + H(+). The enzyme catalyses a 1-acyl-sn-glycero-3-phosphocholine + H2O = sn-glycerol 3-phosphocholine + a fatty acid + H(+). It carries out the reaction a phenyl acetate + H2O = a phenol + acetate + H(+). The catalysed reaction is a butanoate ester + H2O = an aliphatic alcohol + butanoate + H(+). It catalyses the reaction a hexanoate ester + H2O = an aliphatic alcohol + hexanoate + H(+). The enzyme catalyses an octanoate ester + H2O = an aliphatic alcohol + octanoate + H(+). Its function is as follows. TesA is a multifunctional esterase that can act as a thioesterase, arylesterase, lysophospholipase and protease. This chain is Thioesterase 1/protease 1/lysophospholipase L1 (tesA), found in Escherichia coli O6:H1 (strain CFT073 / ATCC 700928 / UPEC).